The following is a 432-amino-acid chain: Adenylosuccinate synthetase (432 aa).

Residues 13-19 and 41-43 each bind GTP; these read GDEGKGK and GHT. The active-site Proton acceptor is the aspartate 14. 2 residues coordinate Mg(2+): aspartate 14 and glycine 41. IMP is bound by residues 14-17, 39-42, threonine 130, arginine 144, glutamine 225, threonine 240, and arginine 304; these read DEGK and NAGH. The active-site Proton donor is histidine 42. Substrate is bound at residue 300–306; that stretch reads ATTGRRR. GTP contacts are provided by residues arginine 306, 332-334, and 415-417; these read KLD and STG.

The protein belongs to the adenylosuccinate synthetase family. Homodimer. The cofactor is Mg(2+).

The protein localises to the cytoplasm. The catalysed reaction is IMP + L-aspartate + GTP = N(6)-(1,2-dicarboxyethyl)-AMP + GDP + phosphate + 2 H(+). The protein operates within purine metabolism; AMP biosynthesis via de novo pathway; AMP from IMP: step 1/2. Plays an important role in the de novo pathway of purine nucleotide biosynthesis. Catalyzes the first committed step in the biosynthesis of AMP from IMP. This chain is Adenylosuccinate synthetase, found in Salmonella arizonae (strain ATCC BAA-731 / CDC346-86 / RSK2980).